Consider the following 211-residue polypeptide: Thiamine-phosphate synthase (211 aa).

4-amino-2-methyl-5-(diphosphooxymethyl)pyrimidine is bound by residues 37-41 (QLRIK) and Asn-69. Mg(2+) contacts are provided by Asp-70 and Asp-89. Ser-108 is a 4-amino-2-methyl-5-(diphosphooxymethyl)pyrimidine binding site. 134–136 (TQT) serves as a coordination point for 2-[(2R,5Z)-2-carboxy-4-methylthiazol-5(2H)-ylidene]ethyl phosphate. Lys-137 serves as a coordination point for 4-amino-2-methyl-5-(diphosphooxymethyl)pyrimidine. Residues Gly-166 and 186–187 (VS) contribute to the 2-[(2R,5Z)-2-carboxy-4-methylthiazol-5(2H)-ylidene]ethyl phosphate site.

This sequence belongs to the thiamine-phosphate synthase family. The cofactor is Mg(2+).

It carries out the reaction 2-[(2R,5Z)-2-carboxy-4-methylthiazol-5(2H)-ylidene]ethyl phosphate + 4-amino-2-methyl-5-(diphosphooxymethyl)pyrimidine + 2 H(+) = thiamine phosphate + CO2 + diphosphate. The catalysed reaction is 2-(2-carboxy-4-methylthiazol-5-yl)ethyl phosphate + 4-amino-2-methyl-5-(diphosphooxymethyl)pyrimidine + 2 H(+) = thiamine phosphate + CO2 + diphosphate. The enzyme catalyses 4-methyl-5-(2-phosphooxyethyl)-thiazole + 4-amino-2-methyl-5-(diphosphooxymethyl)pyrimidine + H(+) = thiamine phosphate + diphosphate. It participates in cofactor biosynthesis; thiamine diphosphate biosynthesis; thiamine phosphate from 4-amino-2-methyl-5-diphosphomethylpyrimidine and 4-methyl-5-(2-phosphoethyl)-thiazole: step 1/1. Condenses 4-methyl-5-(beta-hydroxyethyl)thiazole monophosphate (THZ-P) and 2-methyl-4-amino-5-hydroxymethyl pyrimidine pyrophosphate (HMP-PP) to form thiamine monophosphate (TMP). This chain is Thiamine-phosphate synthase, found in Escherichia coli O9:H4 (strain HS).